Consider the following 422-residue polypeptide: Ena/VASP-like protein (422 aa).

The 115-residue stretch at 4-118 folds into the WH1 domain; that stretch reads FEEFSEQSIC…NAMLFALNIM (115 aa). Positions 120–135 are enriched in polar residues; sequence SQEGGPSSQRQVQNGP. Disordered regions lie at residues 120–139 and 147–375; these read SQEGGPSSQRQVQNGPSPDE and VMEQ…PAGS. Position 136 is a phosphoserine (Ser-136). Over residues 147 to 163 the composition is skewed to basic and acidic residues; that stretch reads VMEQHQQQRQESLERRT. Residues 175-186 show a composition bias toward low complexity; it reads PSSAASAPVSCS. A compositionally biased stretch (pro residues) spans 187-212; it reads GPPPPPPPPVPPPPTGATPPPPPPLP. The segment at 228–248 is EVH2 block A; sequence GLAAAIAGAKLRRVQRPEDAS. The interval 228 to 419 is EVH2; it reads GLAAAIAGAK…DAIRQELSGI (192 aa). The KLKR signature appears at 237-240; it reads KLRR. A compositionally biased stretch (low complexity) spans 248-259; that stretch reads SGGSSPSGTSKS. Phosphoserine is present on residues Ser-252 and Ser-265. An EVH2 block B region spans residues 271 to 288; sequence GGLMEEMNKLLAKRRKAA. The segment covering 305–326 has biased composition (polar residues); it reads EDPSTSPSPGTRAASQPPNSSE. Phosphoserine occurs at positions 310, 312, 335, 337, 347, 355, 360, and 375. Residues 327 to 337 show a composition bias toward basic and acidic residues; sequence AGRKPWERSNS. The required for interaction with ZDHHC17 stretch occupies residues 348-368; the sequence is RTPSVAKSPEAKSPLQSQPHS. The tract at residues 385–419 is EVH2 block C; the sequence is DLDRMKQEILEEVVRELHKVKDEIIDAIRQELSGI. Residues 388 to 414 adopt a coiled-coil conformation; sequence RMKQEILEEVVRELHKVKDEIIDAIRQ.

The protein belongs to the Ena/VASP family. In terms of assembly, homotetramer. Binds to the SH3 domains of ABL1, LYN and SRC. Also binds to profilin, with preference for isoform IIa of PFN2, and the WW domain of APBB1/FE65. Binds to SEMA6A. Interacts, via the Pro-rich region, with the C-terminal SH3 domain of DNMBP. Interacts with RAPH1. Binds, via the EVH1 domain, the Pro-rich domain of Listeria monocytogenes actA. Binds, via the EVH1 domain, the Pro-rich domain of ZYX. Interacts with FYB1. Interacts with ZDHHC17. Post-translationally, phosphorylated by PKA; phosphorylation abolishes binding to SH3 domains of ABL and SRC.

The protein resides in the cytoplasm. The protein localises to the cytoskeleton. It localises to the stress fiber. It is found in the cell projection. Its subcellular location is the lamellipodium. Its function is as follows. Ena/VASP proteins are actin-associated proteins involved in a range of processes dependent on cytoskeleton remodeling and cell polarity such as axon guidance and lamellipodial and filopodial dynamics in migrating cells. EVL enhances actin nucleation and polymerization. This Pongo abelii (Sumatran orangutan) protein is Ena/VASP-like protein (EVL).